Reading from the N-terminus, the 106-residue chain is uncharacterized protein (106 aa).

It is found in the mitochondrion. This is an uncharacterized protein from Claviceps purpurea (Ergot fungus).